The primary structure comprises 126 residues: Defensin-like protein 183 (126 aa).

A signal peptide spans 1-26; the sequence is MEKALSLVVFIIFSIMLASVENKVNA. Disulfide bonds link cysteine 29–cysteine 68, cysteine 36–cysteine 55, cysteine 39–cysteine 62, cysteine 43–cysteine 64, cysteine 80–cysteine 126, cysteine 91–cysteine 111, cysteine 96–cysteine 120, and cysteine 100–cysteine 122.

It belongs to the DEFL family.

It is found in the secreted. The protein is Defensin-like protein 183 (LCR19) of Arabidopsis thaliana (Mouse-ear cress).